A 93-amino-acid chain; its full sequence is Small ribosomal subunit protein uS19 (93 aa).

This sequence belongs to the universal ribosomal protein uS19 family.

Functionally, protein S19 forms a complex with S13 that binds strongly to the 16S ribosomal RNA. The chain is Small ribosomal subunit protein uS19 from Mycobacteroides abscessus (strain ATCC 19977 / DSM 44196 / CCUG 20993 / CIP 104536 / JCM 13569 / NCTC 13031 / TMC 1543 / L948) (Mycobacterium abscessus).